The following is a 434-amino-acid chain: MSDLHELCGFQTRPIGPKYIEDLKFYLKNGIPATYTIEEAYNYTNNIEEEPTTTTTPLHIICSHIPNDASNDEIDIINQMVEILLEYGAGWCLTDINDDTPGCILIRRKLNNTPIYNQVVAAGVRAELLLRKVSEYDMEIIEDTDDLNHEQFEGIQGEETTEEERKEEEPSNTSDIIDEQKVEQPKEDLKEDPSSNQETYLKTKLEYKDGALVTKDRKDGVMMSWETDLMRMGCDSLFKGASIDGEIDDEVNILNIGFGMGIIDTMINNKNPTKQYICEAHPDVLAKLRLDGWYEKQNVVILEGRWQEQLNKLLSEGNVFFNGIYYDTYSEHYEDMLELFDIVVGILKPHGVFSFFNGLGADRQVVYEVYKQLVEMDLANYGLICKFEQIEVPESTLQLEVQNSTDNKSVWDDIKRAYWTCPTYYHPEARFMDV.

Positions 155-198 are disordered; it reads IQGEETTEEERKEEEPSNTSDIIDEQKVEQPKEDLKEDPSSNQE. Over residues 178 to 193 the composition is skewed to basic and acidic residues; that stretch reads DEQKVEQPKEDLKEDP. The RMT2 domain maps to 193–434; sequence PSSNQETYLK…YHPEARFMDV (242 aa). S-adenosyl-L-methionine contacts are provided by residues tyrosine 200, methionine 230, 258–263, 279–281, 306–307, and aspartate 327; these read FGMGII, EAH, and WQ.

This sequence belongs to the class I-like SAM-binding methyltransferase superfamily. RMT2 methyltransferase family. As to quaternary structure, monomer.

The protein localises to the cytoplasm. Its subcellular location is the nucleus. Functionally, S-adenosyl-L-methionine-dependent protein-arginine N-methyltransferase that methylates the delta-nitrogen atom of arginine residues to form N5-methylarginine (type IV) in target proteins. Monomethylates ribosomal protein L12. The sequence is that of Protein arginine N-methyltransferase 2 from Debaryomyces hansenii (strain ATCC 36239 / CBS 767 / BCRC 21394 / JCM 1990 / NBRC 0083 / IGC 2968) (Yeast).